Consider the following 253-residue polypeptide: Transcription factor bHLH106 (253 aa).

In terms of domain architecture, bHLH spans 66–115 (AALRNHKEAERRRRERINSHLNKLRNVLSCNSKTDKATLLAKVVQRVREL).

As to quaternary structure, homodimer.

It localises to the nucleus. This is Transcription factor bHLH106 (BHLH106) from Arabidopsis thaliana (Mouse-ear cress).